The primary structure comprises 208 residues: Ribosomal RNA large subunit methyltransferase E (208 aa).

Residues glycine 62, tryptophan 64, aspartate 82, aspartate 98, and aspartate 123 each coordinate S-adenosyl-L-methionine. Residue lysine 163 is the Proton acceptor of the active site.

This sequence belongs to the class I-like SAM-binding methyltransferase superfamily. RNA methyltransferase RlmE family.

Its subcellular location is the cytoplasm. The catalysed reaction is uridine(2552) in 23S rRNA + S-adenosyl-L-methionine = 2'-O-methyluridine(2552) in 23S rRNA + S-adenosyl-L-homocysteine + H(+). In terms of biological role, specifically methylates the uridine in position 2552 of 23S rRNA at the 2'-O position of the ribose in the fully assembled 50S ribosomal subunit. In Haemophilus ducreyi (strain 35000HP / ATCC 700724), this protein is Ribosomal RNA large subunit methyltransferase E.